The sequence spans 2475 residues: Non-reducing polyketide synthase ausA (2475 aa).

The N-terminal acylcarrier protein transacylase domain (SAT) stretch occupies residues 14-253 (VLFGSKYSEI…HHADHLSAAQ (240 aa)). The region spanning 384 to 800 (SIPIAVTGLA…GSNAAIVLKE (417 aa)) is the Ketosynthase family 3 (KS3) domain. Residues Cys-549, His-684, and His-723 each act as for beta-ketoacyl synthase activity in the active site. Positions 910–1212 (LCFGGQTGNK…CPMDLSGPQA (303 aa)) are malonyl-CoA:ACP transacylase (MAT) domain. Ser-997 functions as the For acyl/malonyl transferase activity in the catalytic mechanism. Positions 1279–1407 (EDLKLVQLLK…GTISLSPGAD (129 aa)) are N-terminal hotdog fold. A PKS/mFAS DH domain is found at 1279 to 1586 (EDLKLVQLLK…FTSVSIQSLR (308 aa)). A product template (PT) domain region spans residues 1282-1585 (KLVQLLKNEG…TFTSVSIQSL (304 aa)). Residue His-1312 is the Proton acceptor; for dehydratase activity of the active site. A C-terminal hotdog fold region spans residues 1435–1586 (SSSGLKRSTV…FTSVSIQSLR (152 aa)). Asp-1493 (proton donor; for dehydratase activity) is an active-site residue. The 78-residue stretch at 1626–1703 (SSNGDDLRTV…ALVQRIFPGR (78 aa)) folds into the Carrier domain. Residue Ser-1663 is modified to O-(pantetheine 4'-phosphoryl)serine. A methyltransferase (CMeT) domain region spans residues 1865–2098 (QHTSEHKLLH…GFNWVDWTDN (234 aa)). The interval 2127–2475 (SAIHEETVVY…YEFLRSHVGL (349 aa)) is thioesterase (TE) domain. Catalysis depends on for thioesterase activity residues Ser-2250, Asp-2412, and His-2444.

It carries out the reaction 3 malonyl-CoA + acetyl-CoA + 2 S-adenosyl-L-methionine = 3,5-dimethylorsellinate + 2 S-adenosyl-L-homocysteine + 3 CO2 + 4 CoA. Its pathway is secondary metabolite biosynthesis; terpenoid biosynthesis. Its function is as follows. Non-reducing polyketide synthase; part of the gene cluster A that mediates the biosynthesis of the fungal meroterpenoid acetoxydehydroaustin. The first step of the pathway is the synthesis of 3,5-dimethylorsellinic acid by the polyketide synthase ausA. 3,5-dimethylorsellinic acid is then prenylated by the polyprenyl transferase ausN. Further epoxidation by the FAD-dependent monooxygenase ausM and cyclization by the probable terpene cyclase ausL lead to the formation of protoaustinoid A. Protoaustinoid A is then oxidized to spiro-lactone preaustinoid A3 by the combined action of the FAD-binding monooxygenases ausB and ausC, and the dioxygenase ausE. Acid-catalyzed keto-rearrangement and ring contraction of the tetraketide portion of preaustinoid A3 by ausJ lead to the formation of preaustinoid A4. The aldo-keto reductase ausK, with the help of ausH, is involved in the next step by transforming preaustinoid A4 into isoaustinone which is in turn hydroxylated by the P450 monooxygenase ausI to form austinolide. The cytochrome P450 monooxygenase ausG then modifies austinolide to austinol. Austinol is further acetylated to austin by the O-acetyltransferase ausP, which spontaneously changes to dehydroaustin. The cytochrome P450 monooxygenase then converts dehydroaustin is into 7-dehydrodehydroaustin. The hydroxylation catalyzed by ausR permits the second O-acetyltransferase ausQ to add an additional acetyl group to the molecule, leading to the formation of acetoxydehydroaustin. Due to genetic rearrangements of the clusters and the subsequent loss of some enzymes, the end product of the Penicillium brasilianum austinoid biosynthesis clusters is acetoxydehydroaustin. This is Non-reducing polyketide synthase ausA from Penicillium brasilianum.